The primary structure comprises 118 residues: Holin-like protein CidA 2 (118 aa).

Transmembrane regions (helical) follow at residues 5–27, 31–50, 62–84, and 88–110; these read MLLL…QGVF, MPGS…TRIL, LLVF…ESFL, and GSII…GYIS.

The protein belongs to the CidA/LrgA family. CidA subfamily.

Its subcellular location is the cell membrane. Its function is as follows. Increases the activity of extracellular murein hydrolases possibly by mediating their export via hole formation. Inhibited by the antiholin-like proteins LrgAB. In an unstressed cell, the LrgAB products probably inhibit the function of the CidA protein. When a cell is stressed by the addition of antibiotics or by other factors in the environment, CidA possibly oligomerizes within the bacterial cell membrane, creating lesions that disrupt the proton motive force, which in turn results in loss of cell viability. These lesions are also hypothesized to regulate the subsequent cell lysis by either allowing the murein hydrolases access to the cell wall substrate and/or regulating their activity by a possible change in the cell wall pH that results from loss of membrane potential. This is Holin-like protein CidA 2 (cidA2) from Bacillus anthracis.